Consider the following 505-residue polypeptide: UDP-N-acetylmuramyl-tripeptide synthetase (505 aa).

A UDP-N-acetyl-alpha-D-muramoyl-L-alanyl-D-glutamate-binding site is contributed by Ser-35. 118–124 (GTDGKSS) provides a ligand contact to ATP. UDP-N-acetyl-alpha-D-muramoyl-L-alanyl-D-glutamate is bound by residues 163 to 164 (ST), Thr-190, and Arg-200. N6-carboxylysine is present on Lys-232.

This sequence belongs to the MurCDEF family. MurE subfamily. In terms of processing, carboxylation is probably crucial for Mg(2+) binding and, consequently, for the gamma-phosphate positioning of ATP.

The protein localises to the cytoplasm. It participates in cell wall biogenesis; peptidoglycan biosynthesis. Catalyzes the addition of an amino acid to the nucleotide precursor UDP-N-acetylmuramoyl-L-alanyl-D-glutamate (UMAG) in the biosynthesis of bacterial cell-wall peptidoglycan. This is UDP-N-acetylmuramyl-tripeptide synthetase from Borreliella afzelii (strain PKo) (Borrelia afzelii).